The sequence spans 218 residues: Uracil-DNA glycosylase (218 aa).

Asp-68 serves as the catalytic Proton acceptor.

The protein belongs to the uracil-DNA glycosylase (UDG) superfamily. UNG family. In terms of assembly, homodimer. Interacts with protein OPG148. Component of the Uracil-DNA glycosylase(UDG)-OPG148-polymerase complex; OPG148 and UDG form a heterodimeric processivity factor that associates with OPG71 to form the processive polymerase holoenzyme.

The enzyme catalyses Hydrolyzes single-stranded DNA or mismatched double-stranded DNA and polynucleotides, releasing free uracil.. In terms of biological role, plays an essential role in viral replication as a component of the DNA polymerase processivity factor. Excises uracil residues from the DNA which can arise as a result of misincorporation of dUMP residues by DNA polymerase or due to deamination of cytosine. This chain is Uracil-DNA glycosylase (OPG116), found in Variola virus.